Here is a 253-residue protein sequence, read N- to C-terminus: MRIGIFDSGVGGITVLKEALNLLPGEDYIYYADTANVPYGTKDKNEVRQYIFKAVEFLINRGIEALVVACNTATSIAIKDLRETYQFPIVGMEPAVKPAVERSRNKKVLVLATPLTIREEKFRNLVSRVKAEDIVDSLGLPGLVEYAEGFVFDENIIIPYLKDRLSPFNLQEYGTLVLGCTHFLYFRDIFNKIIPDHIDIIDGNKGTVRHLKNLLLQSGFKTGSEGSGEIIFYSSGKKDERRLKKYLDILKEI.

Residues Asp7–Ser8 and Tyr39–Gly40 each bind substrate. Cys70 functions as the Proton donor/acceptor in the catalytic mechanism. Asn71 to Thr72 contacts substrate. Residue Cys180 is the Proton donor/acceptor of the active site. Residue Thr181 to His182 participates in substrate binding.

Belongs to the aspartate/glutamate racemases family.

It catalyses the reaction L-glutamate = D-glutamate. It functions in the pathway cell wall biogenesis; peptidoglycan biosynthesis. Functionally, provides the (R)-glutamate required for cell wall biosynthesis. This Halothermothrix orenii (strain H 168 / OCM 544 / DSM 9562) protein is Glutamate racemase.